A 494-amino-acid chain; its full sequence is DnaJ-related protein rsp1 (494 aa).

The J domain maps to 12 to 78 (DYYTILGAES…KLRELFDQRR (67 aa)). The segment covering 229–242 (SEISNGLNSNGVEN) has biased composition (polar residues). The disordered stretch occupies residues 229-354 (SEISNGLNSN…NDSTSNSTEY (126 aa)). The span at 243-256 (SSITKSSPRSSSSS) shows a compositional bias: low complexity. Over residues 270 to 287 (IFTSPNTPEHPSVYQTDI) the composition is skewed to polar residues. The segment covering 321–331 (LSRSKSSSLSR) has biased composition (low complexity). Polar residues predominate over residues 332-354 (NQTRSQLNDLSAENDSTSNSTEY).

In terms of assembly, interacts iwth ssa1.

The protein localises to the cytoplasm. Its subcellular location is the cytoskeleton. The protein resides in the nucleus. In terms of biological role, has a role in the proper organization of the interphase microtubule cytoskeleton. Required for equatorial microtubule organizing center (eMTOC) disassembly into satellites, contributing to the dynamic redistribution of MTOC components for organization of interphase microtubules. The sequence is that of DnaJ-related protein rsp1 (rsp1) from Schizosaccharomyces pombe (strain 972 / ATCC 24843) (Fission yeast).